The chain runs to 198 residues: Phycocyanobilin lyase CpcT homolog (198 aa).

This sequence belongs to the CpcT/CpeT biliprotein lyase family.

Functionally, covalently attaches a chromophore to Cys residue(s) of phycobiliproteins. In vitro is not seen to act as a chromophore lyase for ApcA1, ApcA2, ApcB, ApcD, ApcF, CpcB or PecB, the lyase activity is therefore unsure. This Nostoc sp. (strain PCC 7120 / SAG 25.82 / UTEX 2576) protein is Phycocyanobilin lyase CpcT homolog (cpcT2).